The primary structure comprises 382 residues: Dodecanoyl-[acyl-carrier-protein] hydrolase, chloroplastic (382 aa).

The transit peptide at 1–83 (MATTSLASAF…FSAAEKQWTN (83 aa)) directs the protein to the chloroplast. Residues Asn283, His285, and Cys320 contribute to the active site.

The protein belongs to the acyl-ACP thioesterase family. Forms homodimers. In terms of tissue distribution, expressed in developing cotyledons. Not detected in leaves.

Its subcellular location is the plastid. The protein resides in the chloroplast. The enzyme catalyses dodecanoyl-[ACP] + H2O = dodecanoate + holo-[ACP] + H(+). Its function is as follows. Plays an essential role in chain termination during de novo fatty acid synthesis. High thioesterase activity for lauroyl-ACP versus other acyl-ACPs. This Umbellularia californica (California bay laurel) protein is Dodecanoyl-[acyl-carrier-protein] hydrolase, chloroplastic.